Consider the following 207-residue polypeptide: Urease accessory protein UreE (207 aa).

The tract at residues 171 to 207 (HHGHAHSHSHSHDHDHDHDHDHQHGPGCAHGHGHDHH) is disordered. Residues 180–194 (HSHDHDHDHDHDHQH) show a composition bias toward basic and acidic residues.

Belongs to the UreE family.

The protein resides in the cytoplasm. Its function is as follows. Involved in urease metallocenter assembly. Binds nickel. Probably functions as a nickel donor during metallocenter assembly. The sequence is that of Urease accessory protein UreE from Burkholderia lata (strain ATCC 17760 / DSM 23089 / LMG 22485 / NCIMB 9086 / R18194 / 383).